The following is a 49-amino-acid chain: Beta-toxin Rc1 (49 aa).

3 disulfide bridges follow: Cys-15-Cys-31, Cys-22-Cys-40, and Cys-26-Cys-42.

This sequence belongs to the long (4 C-C) scorpion toxin superfamily. Sodium channel inhibitor family. Beta subfamily. Expressed by the venom gland.

The protein localises to the secreted. Its function is as follows. Beta toxins bind voltage-independently at site-4 of sodium channels (Nav) and shift the voltage of activation toward more negative potentials thereby affecting sodium channel activation and promoting spontaneous and repetitive firing. This toxin acts on X.laevis Nav1.6/SCN8A and insect BgNav1 channels, and also displays a small but significant effect on X.laevis Nav1.4/SCN4A channels. In mice induces nociception (licking and lifting behaviors) during the first 15 minutes after injection, and increases the release of TNF-alpha in J774.1 cells. The sequence is that of Beta-toxin Rc1 from Rhopalurus crassicauda (Scorpion).